The primary structure comprises 360 residues: Nodulin-44 (360 aa).

A signal peptide spans 1–23 (MEEKILMRVIVITVFLFIGAATA). 2 disordered regions span residues 123–148 (FSPR…VIPL) and 228–249 (FSPR…TLGR).

The protein belongs to the nodulin 20 family.

The sequence is that of Nodulin-44 from Glycine max (Soybean).